The primary structure comprises 464 residues: 3-isopropylmalate dehydratase large subunit (464 aa).

[4Fe-4S] cluster contacts are provided by Cys337, Cys397, and Cys400.

It belongs to the aconitase/IPM isomerase family. LeuC type 1 subfamily. Heterodimer of LeuC and LeuD. The cofactor is [4Fe-4S] cluster.

It catalyses the reaction (2R,3S)-3-isopropylmalate = (2S)-2-isopropylmalate. The protein operates within amino-acid biosynthesis; L-leucine biosynthesis; L-leucine from 3-methyl-2-oxobutanoate: step 2/4. Its function is as follows. Catalyzes the isomerization between 2-isopropylmalate and 3-isopropylmalate, via the formation of 2-isopropylmaleate. The sequence is that of 3-isopropylmalate dehydratase large subunit from Bacillus cereus (strain AH187).